Here is a 211-residue protein sequence, read N- to C-terminus: Nucleoside triphosphate pyrophosphatase (211 aa).

The active-site Proton acceptor is D75.

Belongs to the Maf family. It depends on a divalent metal cation as a cofactor.

It is found in the cytoplasm. The catalysed reaction is a ribonucleoside 5'-triphosphate + H2O = a ribonucleoside 5'-phosphate + diphosphate + H(+). The enzyme catalyses a 2'-deoxyribonucleoside 5'-triphosphate + H2O = a 2'-deoxyribonucleoside 5'-phosphate + diphosphate + H(+). Functionally, nucleoside triphosphate pyrophosphatase. May have a dual role in cell division arrest and in preventing the incorporation of modified nucleotides into cellular nucleic acids. In Prochlorococcus marinus (strain NATL2A), this protein is Nucleoside triphosphate pyrophosphatase.